Consider the following 189-residue polypeptide: Mercury resistance operon ORF3 (189 aa).

A signal peptide (tat-type signal) is located at residues 1 to 27 (MTSPSPTARRTRLRRRTALALAAAATA). The Thioredoxin domain occupies 38 to 189 (TKANTPATRA…IQDALKKAGA (152 aa)).

In terms of processing, predicted to be exported by the Tat system. The position of the signal peptide cleavage has not been experimentally proven.

Its subcellular location is the secreted. In terms of biological role, probable mercury binding protein. In Streptomyces lividans, this protein is Mercury resistance operon ORF3.